Here is a 123-residue protein sequence, read N- to C-terminus: Mediator of RNA polymerase II transcription subunit 9 (123 aa).

Residues 95-123 (WQLHIQEKKIELEKKTKHLQRLRESIQKQ) are a coiled coil.

The protein belongs to the Mediator complex subunit 9 family. As to quaternary structure, component of the Mediator complex.

It is found in the nucleus. Functionally, component of the Mediator complex, a coactivator involved in the regulated transcription of nearly all RNA polymerase II-dependent genes. Mediator functions as a bridge to convey information from gene-specific regulatory proteins to the basal RNA polymerase II transcription machinery. Mediator is recruited to promoters by direct interactions with regulatory proteins and serves as a scaffold for the assembly of a functional preinitiation complex with RNA polymerase II and the general transcription factors. The chain is Mediator of RNA polymerase II transcription subunit 9 (CSE2) from Kluyveromyces lactis (strain ATCC 8585 / CBS 2359 / DSM 70799 / NBRC 1267 / NRRL Y-1140 / WM37) (Yeast).